Here is a 1328-residue protein sequence, read N- to C-terminus: Retrovirus-related Pol polyprotein from transposon TNT 1-94 (1328 aa).

Residues 189-265 (PENQGQALIT…SGQKNDDNTA (77 aa)) form a disordered region. Positions 217–229 (ARGKSKNRSKSRV) are enriched in basic residues. A CCHC-type zinc finger spans residues 230-247 (RNCYNCNQPGHFKRDCPN). A compositionally biased stretch (basic and acidic residues) spans 241 to 253 (FKRDCPNPRKGKG). Catalysis depends on Asp297, which acts as the For protease activity. One can recognise an Integrase catalytic domain in the interval 473 to 642 (SSERKLNILD…IPERVWTNKE (170 aa)). A compositionally biased stretch (polar residues) spans 729 to 742 (TIPSTSNNPTSAES). Residues 729–800 (TIPSTSNNPT…RVESRRYPST (72 aa)) are disordered. Basic and acidic residues predominate over residues 770 to 798 (EVEHPTQGEEQHQPLRRSERPRVESRRYP).

The catalysed reaction is DNA(n) + a 2'-deoxyribonucleoside 5'-triphosphate = DNA(n+1) + diphosphate. This chain is Retrovirus-related Pol polyprotein from transposon TNT 1-94, found in Nicotiana tabacum (Common tobacco).